The following is a 428-amino-acid chain: 3-phosphoshikimate 1-carboxyvinyltransferase (428 aa).

Positions 22, 23, and 27 each coordinate 3-phosphoshikimate. K22 contributes to the phosphoenolpyruvate binding site. Phosphoenolpyruvate contacts are provided by G94 and R122. 3-phosphoshikimate is bound by residues S168, S169, Q170, S196, D315, and K342. Q170 is a binding site for phosphoenolpyruvate. Residue D315 is the Proton acceptor of the active site. Phosphoenolpyruvate is bound by residues R346, R389, and K414.

The protein belongs to the EPSP synthase family. As to quaternary structure, monomer.

It localises to the cytoplasm. The enzyme catalyses 3-phosphoshikimate + phosphoenolpyruvate = 5-O-(1-carboxyvinyl)-3-phosphoshikimate + phosphate. It participates in metabolic intermediate biosynthesis; chorismate biosynthesis; chorismate from D-erythrose 4-phosphate and phosphoenolpyruvate: step 6/7. Catalyzes the transfer of the enolpyruvyl moiety of phosphoenolpyruvate (PEP) to the 5-hydroxyl of shikimate-3-phosphate (S3P) to produce enolpyruvyl shikimate-3-phosphate and inorganic phosphate. This chain is 3-phosphoshikimate 1-carboxyvinyltransferase, found in Thiobacillus denitrificans (strain ATCC 25259 / T1).